Consider the following 511-residue polypeptide: Putative CBL-interacting protein kinase 13 (511 aa).

The region spanning 25–279 (FEVGKLLGQG…AEGIMENEWF (255 aa)) is the Protein kinase domain. ATP is bound by residues 31-39 (LGQGNFAKV) and Lys54. The active-site Proton acceptor is Asp147. The segment at 165-194 (DFGLSAVADGMRRDGLFHTFCGTPAYVAPE) is activation loop. Residues 307–340 (VDAPTSPPDTPRTVDSGDVGAAPTRPRKAGSLTS) are disordered. Positions 321-383 (DSGDVGAAPT…PGFDLSGLFD (63 aa)) constitute an NAF domain. A PPI region spans residues 400–429 (KHTARFVSAAPVEVIVATLEAAAAAAGMAV).

This sequence belongs to the protein kinase superfamily. CAMK Ser/Thr protein kinase family. SNF1 subfamily. Requires Mn(2+) as cofactor.

The enzyme catalyses L-seryl-[protein] + ATP = O-phospho-L-seryl-[protein] + ADP + H(+). It carries out the reaction L-threonyl-[protein] + ATP = O-phospho-L-threonyl-[protein] + ADP + H(+). Functionally, CIPK serine-threonine protein kinases interact with CBL proteins. Binding of a CBL protein to the regulatory NAF domain of CIPK protein lead to the activation of the kinase in a calcium-dependent manner. In Oryza sativa subsp. japonica (Rice), this protein is Putative CBL-interacting protein kinase 13 (CIPK13).